We begin with the raw amino-acid sequence, 319 residues long: Zinc finger protein-like 1 homolog (319 aa).

The B box-type; degenerate zinc finger occupies 1 to 43 (MGLCKCPKRKVTNLFCYEHRVNVCEFCLVDNHPNCVVQSYLNW). Residues 53–101 (CSLCHTTLTQGETIRLNCLHLLHWRCFDDWAASFPPTTAPAGYRCPCCS) form an RING-type; atypical zinc finger. The interval 212-232 (ESSSDTRPLLRQDRDADNEEN) is disordered. Over residues 219–232 (PLLRQDRDADNEEN) the composition is skewed to basic and acidic residues. Residues 264-284 (KMAIFVMFLALLALITIITVL) form a helical membrane-spanning segment.

The protein belongs to the ZFPL1 family.

The protein resides in the membrane. The protein is Zinc finger protein-like 1 homolog of Caenorhabditis briggsae.